A 546-amino-acid chain; its full sequence is 2-isopropylmalate synthase (546 aa).

The Pyruvate carboxyltransferase domain occupies 8 to 271 (ILIFDTTLRD…NKFFNRNSDS (264 aa)). Mn(2+) is bound by residues Asp-17, His-208, His-210, and Asn-244. The regulatory domain stretch occupies residues 408–546 (QLSLVQVSCG…DKTLLSNPGK (139 aa)).

Belongs to the alpha-IPM synthase/homocitrate synthase family. LeuA type 1 subfamily. As to quaternary structure, homodimer. Mn(2+) is required as a cofactor.

Its subcellular location is the cytoplasm. The enzyme catalyses 3-methyl-2-oxobutanoate + acetyl-CoA + H2O = (2S)-2-isopropylmalate + CoA + H(+). Its pathway is amino-acid biosynthesis; L-leucine biosynthesis; L-leucine from 3-methyl-2-oxobutanoate: step 1/4. Catalyzes the condensation of the acetyl group of acetyl-CoA with 3-methyl-2-oxobutanoate (2-ketoisovalerate) to form 3-carboxy-3-hydroxy-4-methylpentanoate (2-isopropylmalate). This Prochlorococcus marinus (strain MIT 9215) protein is 2-isopropylmalate synthase.